We begin with the raw amino-acid sequence, 353 residues long: Probable G-protein coupled receptor 139 (353 aa).

Topologically, residues 1-29 (MEHTHAHLAANSSLSWWSPGSACGLGFVP) are extracellular. N11 is a glycosylation site (N-linked (GlcNAc...) asparagine). A helical membrane pass occupies residues 30-50 (VVYYSLLLCLGLPANILTVII). Topologically, residues 51-65 (LSQLVARRQKSSYNY) are cytoplasmic. A helical membrane pass occupies residues 66–86 (LLALAAADILVLFFIVFVDFL). Topologically, residues 87–102 (LEDFILNMQMPQVPDK) are extracellular. The helical transmembrane segment at 103–123 (IIEVLEFSSIHTSIWITVPLT) threads the bilayer. The Cytoplasmic portion of the chain corresponds to 124 to 148 (IDRYIAVCHPLKYHTVSYPARTRKV). The chain crosses the membrane as a helical span at residues 149 to 169 (IVSVYITCFLTSIPYYWWPNI). Over 170-181 (WTEDYISTSVHH) the chain is Extracellular. A helical transmembrane segment spans residues 182 to 202 (VLIWIHCFTVYLVPCSIFFIL). At 203-228 (NSIIVYKLRRKSNFRLRGYSTGKTTA) the chain is on the cytoplasmic side. A helical membrane pass occupies residues 229 to 249 (ILFTITSIFATLWAPRIIMIL). Residues 250-268 (YHLYGAPIQNRWLVHIMSD) are Extracellular-facing. The chain crosses the membrane as a helical span at residues 269–289 (IANMLALLNTAINFFLYCFIS). The Cytoplasmic segment spans residues 290-353 (KRFRTMAAAT…KNGKPIKVSP (64 aa)).

It belongs to the G-protein coupled receptor 1 family. In terms of tissue distribution, expressed almost exclusively in the brain. Detected at very low levels in the peripheral tissues.

The protein localises to the cell membrane. Its function is as follows. Orphan receptor. Seems to act through a G(q/11)-mediated pathway. The polypeptide is Probable G-protein coupled receptor 139 (GPR139) (Homo sapiens (Human)).